The following is a 181-amino-acid chain: Protein Syd (181 aa).

This sequence belongs to the Syd family.

It localises to the cell inner membrane. Functionally, interacts with the SecY protein in vivo. May bind preferentially to an uncomplexed state of SecY, thus functioning either as a chelating agent for excess SecY in the cell or as a regulatory factor that negatively controls the translocase function. This is Protein Syd from Citrobacter koseri (strain ATCC BAA-895 / CDC 4225-83 / SGSC4696).